The primary structure comprises 91 residues: MQRNLVVLLFLGMVALSSCGLREKHVQKLVKYAVPVGTLRTILQTVVHKVGKTQFGCPAYQGYCDDHCQDIKKEEGFCHGFKCKCGIPMGF.

The signal sequence occupies residues 1 to 19; the sequence is MQRNLVVLLFLGMVALSSC. Residues 20 to 27 constitute a propeptide that is removed on maturation; the sequence is GLREKHVQ. In terms of domain architecture, BetaSPN-type CS-alpha/beta spans 54–91; it reads QFGCPAYQGYCDDHCQDIKKEEGFCHGFKCKCGIPMGF. 3 cysteine pairs are disulfide-bonded: Cys57/Cys78, Cys64/Cys83, and Cys68/Cys85.

The protein belongs to the long chain scorpion toxin family. Class 1 subfamily. As to quaternary structure, monomer (both chains). Expressed by the venom gland.

The protein resides in the secreted. Inhibits voltage-gated potassium channels (Kv). Does not activate Kv7 channels. Functionally, peptide activator of Kv7.4/KCNQ4 channels. Also acts as a subtype-selective activator of channels formed by Kv7.3/KCNQ3, Kv7.2/Kv7.3 (KCNQ2/KCNQ3), Kv7.5/Kv7.3 (KCNQ3/KCNQ5) subunits. The protein is Potassium channel toxin AaTXK-beta of Androctonus australis (Sahara scorpion).